A 464-amino-acid chain; its full sequence is MVLAFWLAFFTYTWITLMLDASAVKEPHQQCLSSPKQTRIRETRMRKDDLTKVWPLKREQLLHIEDHDFSTRPGFGGSPVPVGIDVQVESIDSISEVNMDFTMTFYLRHYWKDERLSFPSTTNKSMTFDRRLIQKIWVPDIFFVHSKRSFIHDTTVENIMLRVHPDGNVLFSLRITVSAMCFMDFSRFPLDTQNCSLELESYAYNEEDLMLYWKHGNKSLNTEEHISLSQFFIEEFSASSGLAFYSSTGWYYRLFINFVLRRHIFFFVLQTYFPAMLMVMLSWVSFWIDRRAVPARVSLGITTVLTMSTIVTGVSASMPQVSYVKAVDVYMWVSSLFVFLSVIEYAAVNYLTTVEEWKQLNRRGKISGMYNIDAVQAMAFDGCYHDGETDVDQTSFFLHSEEDSMRTKFTGSPCADSSQIKRKSLGGNVGRIILENNHVIDTYSRIVFPVVYIIFNLFYWGIYV.

The signal sequence occupies residues 1 to 15 (MVLAFWLAFFTYTWI). Residues 16–263 (TLMLDASAVK…LFINFVLRRH (248 aa)) lie on the Extracellular side of the membrane. Arg-108 provides a ligand contact to 4-aminobutanoate. Asn-123 carries an N-linked (GlcNAc...) asparagine glycan. Position 172 (Ser-172) interacts with 4-aminobutanoate. A disulfide bond links Cys-181 and Cys-195. N-linked (GlcNAc...) asparagine glycosylation occurs at Asn-194. 4-aminobutanoate is bound at residue Glu-200. Residues 264–284 (IFFFVLQTYFPAMLMVMLSWV) traverse the membrane as a helical segment. Over 285–296 (SFWIDRRAVPAR) the chain is Cytoplasmic. A helical membrane pass occupies residues 297–317 (VSLGITTVLTMSTIVTGVSAS). Topologically, residues 318 to 328 (MPQVSYVKAVD) are extracellular. A helical transmembrane segment spans residues 329-349 (VYMWVSSLFVFLSVIEYAAVN). The interaction with SQSTM1 stretch occupies residues 344–445 (EYAAVNYLTT…NNHVIDTYSR (102 aa)). Residues 350–443 (YLTTVEEWKQ…LENNHVIDTY (94 aa)) lie on the Cytoplasmic side of the membrane. Residues 444-464 (SRIVFPVVYIIFNLFYWGIYV) form a helical membrane-spanning segment.

Belongs to the ligand-gated ion channel (TC 1.A.9) family. Gamma-aminobutyric acid receptor (TC 1.A.9.5) subfamily. GABRR3 sub-subfamily. As to quaternary structure, three rho subunits (rho-1/GBRR1, rho-2/GBRR2 and rho-3/GBRR3) coassemble either to form functional homopentamers or heteropentamers. Forms a ternary complex with SQSTM1 and PRKCZ. Expressed in retina.

The protein localises to the postsynaptic cell membrane. It is found in the cell membrane. The catalysed reaction is chloride(in) = chloride(out). With respect to regulation, activated by agonists in the following the potency order: muscimol &gt; TACP &gt; TACA &gt; thiomuscimol &gt; CAMP &gt; CACA, when forming a homopentamer. Inhibited by TPMPA, a rho-specific antagonist, when forming a homopentamer. Inhibited antagonists in the following the potency order: TAMP = TPMPA &gt; P4MPA = THIP &gt; 14AA &gt; 3-APA, when forming a homopentamer. Rho subunit of the pentameric ligand-gated chloride channels responsible for mediating the effects of gamma-aminobutyric acid (GABA), the major inhibitory neurotransmitter in the brain. Rho-containing GABA-gated chloride channels are a subclass of GABA(A) receptors (GABAARs) entirely composed of rho subunits, where GABA molecules bind at the rho intersubunit interfaces. When activated by GABA, rho-GABAARs selectively allow the flow of chloride anions across the cell membrane down their electrochemical gradient. The polypeptide is Gamma-aminobutyric acid receptor subunit rho-3 (Rattus norvegicus (Rat)).